Reading from the N-terminus, the 317-residue chain is R-phycoerythrin gamma chain, chloroplastic (317 aa).

Residues Met-1–Met-40 constitute a chloroplast transit peptide. Residues Cys-94 and Cys-133 each coordinate phycourobilin. Cys-210 serves as a coordination point for (2R,3E)-phycoerythrobilin. Residue Cys-297 participates in phycourobilin binding.

In terms of assembly, heteromer of 1 alpha, 1 beta and 2 gamma chains. Contains four covalently linked bilin chromophores.

It localises to the plastid. Its subcellular location is the chloroplast thylakoid membrane. Critical for the incorporation of phycoerythrin in the phycobilisome complex. The protein is R-phycoerythrin gamma chain, chloroplastic of Aglaothamnion neglectum (Red alga).